Here is a 322-residue protein sequence, read N- to C-terminus: MHEVDIAVVGAGPAGLFAAYYAGFRGLSVAVVDALPEPGGQITAMYPEKLIHDVAGFPAIKGRDLVANLVAQAAPFAPRYLLGTRAEKLSYADGRPVLGLAGGEQLHCGAVVITGGLGSFTPRPLPVAERFVGTGIIYFVPQPADLTGQDVLIVGGGDSAFDWASTLQPLARSVTLVHRREKFRAHAATVARVHALPVRVVVNAEVTRLHGGGAVTGAEITVRGGAAELLPVDTVVAALGFTADLGPLAEWGLRLDRRHLVVDSTMATNLPRVFAAGDITEYQGKVRLIATGFGEAATAVNNAAVVLDPAAHLFPGHSSDET.

7 residues coordinate FAD: aspartate 33, glutamine 41, tyrosine 46, alanine 86, phenylalanine 120, aspartate 278, and serine 319.

The protein belongs to the ferredoxin--NADP reductase type 2 family. As to quaternary structure, homodimer. FAD serves as cofactor.

It carries out the reaction 2 reduced [2Fe-2S]-[ferredoxin] + NADP(+) + H(+) = 2 oxidized [2Fe-2S]-[ferredoxin] + NADPH. The chain is Ferredoxin--NADP reductase from Salinispora tropica (strain ATCC BAA-916 / DSM 44818 / JCM 13857 / NBRC 105044 / CNB-440).